Consider the following 120-residue polypeptide: MFLLTGYEYFLGFLLIAAAVPVLALVTNLIVAPKGRTGERKLTYESGMEPIGGAWIQFNIRYYMFALVFVIFDVETVFLYPWAVAFNRLGLLAFIEALIFIAILVIALAYAWRKGALEWS.

Transmembrane regions (helical) follow at residues 10–30 (FLGF…TNLI), 64–84 (MFAL…PWAV), and 89–109 (LGLL…IALA).

The protein belongs to the complex I subunit 3 family. In terms of assembly, NDH-1 can be composed of about 15 different subunits; different subcomplexes with different compositions have been identified which probably have different functions.

It is found in the cellular thylakoid membrane. The enzyme catalyses a plastoquinone + NADH + (n+1) H(+)(in) = a plastoquinol + NAD(+) + n H(+)(out). It catalyses the reaction a plastoquinone + NADPH + (n+1) H(+)(in) = a plastoquinol + NADP(+) + n H(+)(out). Its function is as follows. NDH-1 shuttles electrons from an unknown electron donor, via FMN and iron-sulfur (Fe-S) centers, to quinones in the respiratory and/or the photosynthetic chain. The immediate electron acceptor for the enzyme in this species is believed to be plastoquinone. Couples the redox reaction to proton translocation, and thus conserves the redox energy in a proton gradient. Cyanobacterial NDH-1 also plays a role in inorganic carbon-concentration. This is NAD(P)H-quinone oxidoreductase subunit 3 from Prochlorococcus marinus (strain AS9601).